The chain runs to 241 residues: 2-C-methyl-D-erythritol 4-phosphate cytidylyltransferase (241 aa).

The protein belongs to the IspD/TarI cytidylyltransferase family. IspD subfamily.

It catalyses the reaction 2-C-methyl-D-erythritol 4-phosphate + CTP + H(+) = 4-CDP-2-C-methyl-D-erythritol + diphosphate. Its pathway is isoprenoid biosynthesis; isopentenyl diphosphate biosynthesis via DXP pathway; isopentenyl diphosphate from 1-deoxy-D-xylulose 5-phosphate: step 2/6. Functionally, catalyzes the formation of 4-diphosphocytidyl-2-C-methyl-D-erythritol from CTP and 2-C-methyl-D-erythritol 4-phosphate (MEP). This chain is 2-C-methyl-D-erythritol 4-phosphate cytidylyltransferase, found in Baumannia cicadellinicola subsp. Homalodisca coagulata.